The chain runs to 757 residues: MDVNPTLLFLKEPAQNAISTTFPYTGDPPYSHGTGTGYTMDTVNRTHQYSEKGKWTTNTETGAPQLNPIDGPLPEDNEPSGYAQQDCVLEAMAFLEESHPGIFENSCLETMEVVQQTRVDRLTQGRKTYDWTLNRNQPAATALANTIEVFRSNGLTANESGRLIDFLKDVMESMDKEEMEITTHFQRKRRVRDNMTKKMVTQRTIGKKKQRVNKRSYLIRALTLNTMTKDAERGKLKRRAIATPGMQIRGFVYFVETLARSICEKLEQSGLPVGGNEKKAKLANVVRKMMTNSQDTELSFTITGDNTKWNENQNPRMFLAMITYITKNQPEWFRNILSIAPIMFSNKMARLGKGYMFESKRMKLRTQIPAEMLASIDLKYFNESTRKKIEKIRPLLIDGTASLSPGMMMGMFNMLSTVLGVSILNLGQKKYTKTTYWWDGLQSSDDFALIVNAPNHEGIQAGVDRFYRTCKLVGINMSKKKSYINRTGTFEFTSFFYRYGFVANFSMELPSFGVSGINESADMSIGVTVIKNNMINNDLGPATAQMALQLFIKDYRYTYRCHRGHTQIQTRRSFELKKLWEQTRSKAGLFVSDGGPNLYNIRNLHIPEVCLKWELMDEDYQGRLCNPLNPFVSHKEIESVNNAVVMPAHGPAKSMEYDAVATTHSWIPKRNRSILNTSQRGILEDEQMYQKCCNLFEKFFPSSSYRRPVGISSMVEAMVSRARIDARIDFESGRIKKEEFSEIMKICSTIEELRRQK.

The interval 50–81 (SEKGKWTTNTETGAPQLNPIDGPLPEDNEPSG) is disordered. A compositionally biased stretch (polar residues) spans 55–64 (WTTNTETGAP). Short sequence motifs (nuclear localization signal) lie at residues 187–195 (RKRRVRDNM) and 203–216 (RTIG…NKRS). Residues 249–256 (RGFVYFVE) form a promoter-binding site region. One can recognise a RdRp catalytic domain in the interval 286 to 483 (VRKMMTNSQD…GINMSKKKSY (198 aa)).

This sequence belongs to the influenza viruses polymerase PB1 family. As to quaternary structure, influenza RNA polymerase is composed of three subunits: PB1, PB2 and PA. Interacts (via N-terminus) with PA (via C-terminus). Interacts (via C-terminus) with PB2 (via N-terminus); this interaction is essential for transcription initiation. In terms of processing, phosphorylated by host PRKCA.

It localises to the host nucleus. Its subcellular location is the host cytoplasm. It carries out the reaction RNA(n) + a ribonucleoside 5'-triphosphate = RNA(n+1) + diphosphate. Functionally, RNA-dependent RNA polymerase which is responsible for replication and transcription of virus RNA segments. The transcription of viral mRNAs occurs by a unique mechanism called cap-snatching. 5' methylated caps of cellular mRNAs are cleaved after 10-13 nucleotides by PA. In turn, these short capped RNAs are used as primers by PB1 for transcription of viral mRNAs. During virus replication, PB1 initiates RNA synthesis and copy vRNA into complementary RNA (cRNA) which in turn serves as a template for the production of more vRNAs. The chain is RNA-directed RNA polymerase catalytic subunit from Influenza A virus (strain A/Swine/Colorado/1/1977 H3N2).